An 81-amino-acid chain; its full sequence is 2,3-bisphosphoglycerate-independent phosphoglycerate mutase (81 aa).

The active-site Phosphoserine intermediate is the Ser14. Ser14 is a binding site for Mn(2+). His75 serves as a coordination point for substrate.

This sequence belongs to the BPG-independent phosphoglycerate mutase family. As to quaternary structure, monomer. It depends on Mn(2+) as a cofactor.

The catalysed reaction is (2R)-2-phosphoglycerate = (2R)-3-phosphoglycerate. Its pathway is carbohydrate degradation; glycolysis; pyruvate from D-glyceraldehyde 3-phosphate: step 3/5. Its function is as follows. Catalyzes the interconversion of 2-phosphoglycerate and 3-phosphoglycerate. This is 2,3-bisphosphoglycerate-independent phosphoglycerate mutase (gpmI) from Tomato big bud phytoplasma.